A 238-amino-acid polypeptide reads, in one-letter code: 2-phytyl-1,4-naphtoquinone methyltransferase (238 aa).

This sequence belongs to the class I-like SAM-binding methyltransferase superfamily. MenG/UbiE family.

The enzyme catalyses demethylphylloquinol + S-adenosyl-L-methionine = phylloquinol + S-adenosyl-L-homocysteine + H(+). Its pathway is cofactor biosynthesis; phylloquinone biosynthesis. In terms of biological role, methyltransferase required for the conversion of 2-phytyl-1,4-beta-naphthoquinol to phylloquinol. This Synechocystis sp. (strain ATCC 27184 / PCC 6803 / Kazusa) protein is 2-phytyl-1,4-naphtoquinone methyltransferase.